The following is an 828-amino-acid chain: DNA gyrase subunit A (828 aa).

The 466-residue stretch at 32–497 (LPDVRDGLKP…EVLSLEDEDL (466 aa)) folds into the Topo IIA-type catalytic domain. The active-site O-(5'-phospho-DNA)-tyrosine intermediate is Tyr120. Residues 524 to 530 (QKRGGRG) carry the GyrA-box motif.

The protein belongs to the type II topoisomerase GyrA/ParC subunit family. Heterotetramer, composed of two GyrA and two GyrB chains. In the heterotetramer, GyrA contains the active site tyrosine that forms a transient covalent intermediate with DNA, while GyrB binds cofactors and catalyzes ATP hydrolysis.

The protein localises to the cytoplasm. The enzyme catalyses ATP-dependent breakage, passage and rejoining of double-stranded DNA.. Functionally, a type II topoisomerase that negatively supercoils closed circular double-stranded (ds) DNA in an ATP-dependent manner to modulate DNA topology and maintain chromosomes in an underwound state. Negative supercoiling favors strand separation, and DNA replication, transcription, recombination and repair, all of which involve strand separation. Also able to catalyze the interconversion of other topological isomers of dsDNA rings, including catenanes and knotted rings. Type II topoisomerases break and join 2 DNA strands simultaneously in an ATP-dependent manner. The chain is DNA gyrase subunit A from Streptococcus pyogenes serotype M18 (strain MGAS8232).